Consider the following 95-residue polypeptide: Aspartyl/glutamyl-tRNA(Asn/Gln) amidotransferase subunit C (95 aa).

Belongs to the GatC family. In terms of assembly, heterotrimer of A, B and C subunits.

It catalyses the reaction L-glutamyl-tRNA(Gln) + L-glutamine + ATP + H2O = L-glutaminyl-tRNA(Gln) + L-glutamate + ADP + phosphate + H(+). It carries out the reaction L-aspartyl-tRNA(Asn) + L-glutamine + ATP + H2O = L-asparaginyl-tRNA(Asn) + L-glutamate + ADP + phosphate + 2 H(+). Functionally, allows the formation of correctly charged Asn-tRNA(Asn) or Gln-tRNA(Gln) through the transamidation of misacylated Asp-tRNA(Asn) or Glu-tRNA(Gln) in organisms which lack either or both of asparaginyl-tRNA or glutaminyl-tRNA synthetases. The reaction takes place in the presence of glutamine and ATP through an activated phospho-Asp-tRNA(Asn) or phospho-Glu-tRNA(Gln). The polypeptide is Aspartyl/glutamyl-tRNA(Asn/Gln) amidotransferase subunit C (Rhizobium etli (strain CIAT 652)).